We begin with the raw amino-acid sequence, 687 residues long: Protein 4.2 (687 aa).

A lipid anchor (N-myristoyl glycine) is attached at glycine 2. A band 3 binding region spans residues 31 to 39 (LFVRRGQPF). Serine 247 is subject to Phosphoserine.

The protein belongs to the transglutaminase superfamily. Transglutaminase family. In terms of assembly, component of the ankyrin-1 complex in the erythrocyte, composed of ANK1, RHCE, RHAG, SLC4A1, EPB42, GYPA, GYPB and AQP1. Interacts with SLC4A1 (via the cytoplasmic domain); this interaction is mediated by the SLC4A1 Band 3-I dimer. Interacts with ANK1 (via ANK 1-13 repeats). Interacts with AQP1 (via the C-terminal).

It localises to the cell membrane. It is found in the cytoplasm. Its subcellular location is the cytoskeleton. Its function is as follows. Component of the ankyrin-1 complex, a multiprotein complex involved in the stability and shape of the erythrocyte membrane. In Bos taurus (Bovine), this protein is Protein 4.2.